The sequence spans 258 residues: Phosphoribosylaminoimidazole-succinocarboxamide synthase (258 aa).

The protein belongs to the SAICAR synthetase family.

The enzyme catalyses 5-amino-1-(5-phospho-D-ribosyl)imidazole-4-carboxylate + L-aspartate + ATP = (2S)-2-[5-amino-1-(5-phospho-beta-D-ribosyl)imidazole-4-carboxamido]succinate + ADP + phosphate + 2 H(+). It participates in purine metabolism; IMP biosynthesis via de novo pathway; 5-amino-1-(5-phospho-D-ribosyl)imidazole-4-carboxamide from 5-amino-1-(5-phospho-D-ribosyl)imidazole-4-carboxylate: step 1/2. This chain is Phosphoribosylaminoimidazole-succinocarboxamide synthase, found in Sphingopyxis alaskensis (strain DSM 13593 / LMG 18877 / RB2256) (Sphingomonas alaskensis).